The primary structure comprises 247 residues: 1-(5-phosphoribosyl)-5-[(5-phosphoribosylamino)methylideneamino] imidazole-4-carboxamide isomerase (247 aa).

D16 (proton acceptor) is an active-site residue. D135 acts as the Proton donor in catalysis.

The protein belongs to the HisA/HisF family.

The protein localises to the cytoplasm. The catalysed reaction is 1-(5-phospho-beta-D-ribosyl)-5-[(5-phospho-beta-D-ribosylamino)methylideneamino]imidazole-4-carboxamide = 5-[(5-phospho-1-deoxy-D-ribulos-1-ylimino)methylamino]-1-(5-phospho-beta-D-ribosyl)imidazole-4-carboxamide. The protein operates within amino-acid biosynthesis; L-histidine biosynthesis; L-histidine from 5-phospho-alpha-D-ribose 1-diphosphate: step 4/9. The polypeptide is 1-(5-phosphoribosyl)-5-[(5-phosphoribosylamino)methylideneamino] imidazole-4-carboxamide isomerase (Paenarthrobacter aurescens (strain TC1)).